Here is a 414-residue protein sequence, read N- to C-terminus: uncharacterized protein (414 aa).

The helical transmembrane segment at 367-384 (TTWALTLICIACILLFFV) threads the bilayer.

The protein localises to the virion membrane. This is an uncharacterized protein from Human cytomegalovirus (strain Merlin) (HHV-5).